The chain runs to 207 residues: NADH-quinone oxidoreductase chain 5 (207 aa).

It belongs to the complex I 30 kDa subunit family. As to quaternary structure, NDH-1 is composed of at least 14 different subunits, Nqo1 to Nqo14. The complex has a L-shaped structure, with the hydrophobic arm (subunits Nqo7, Nqo8, Nqo10 to Nqo14) embedded in the inner membrane and the hydrophilic peripheral arm (subunits Nqo1 to Nqo6, Nqo9) protruding into the bacterial cytoplasm. The hydrophilic domain contains all the redox centers.

The protein localises to the cell inner membrane. The catalysed reaction is a quinone + NADH + 5 H(+)(in) = a quinol + NAD(+) + 4 H(+)(out). Its function is as follows. NDH-1 shuttles electrons from NADH, via FMN and iron-sulfur (Fe-S) centers, to quinones in the respiratory chain. The immediate electron acceptor for the enzyme in this species is believed to be ubiquinone. Couples the redox reaction to proton translocation (for every two electrons transferred, four hydrogen ions are translocated across the cytoplasmic membrane), and thus conserves the redox energy in a proton gradient. The protein is NADH-quinone oxidoreductase chain 5 (nqo5) of Paracoccus denitrificans.